Reading from the N-terminus, the 269-residue chain is Bis(5'-nucleosyl)-tetraphosphatase, symmetrical (269 aa).

Belongs to the Ap4A hydrolase family.

It carries out the reaction P(1),P(4)-bis(5'-adenosyl) tetraphosphate + H2O = 2 ADP + 2 H(+). Hydrolyzes diadenosine 5',5'''-P1,P4-tetraphosphate to yield ADP. This chain is Bis(5'-nucleosyl)-tetraphosphatase, symmetrical, found in Vibrio vulnificus (strain YJ016).